Consider the following 339-residue polypeptide: MIFIDACFRKETPYTPIWMMRQAGRYLSEYQESRKKAGSFLELCKNSDLATEVTLQPVEILGVDAAILFSDILVVPLEMGLNLEFIPKKGPHFLETITDLKSVESLKVGVYKQLNYVYDTISQTRQKLSKEKALIGFCGSPWTLATYMIEGEGSKSYAKSKKMLYSEPEVLKALLEKLSLELIEYLSLQIQAGVNAVMIFDSWASALEKEAYLEFSWDYLKKISKELKKRYAHIPVILFPKGIGAYLDSIDGEFDVFGVDWGTPLTAAKKILGGKYVLQGNLEPTRLYDKNALEEGVEKILKVMGNQGHIFNLGHGMLPDLPRENAKYLVQLVHAKTRR.

Residues Arg21–Arg25, Phe40, Asp71, Tyr147, Ser202, and His315 contribute to the substrate site.

Belongs to the uroporphyrinogen decarboxylase family. As to quaternary structure, homodimer.

It localises to the cytoplasm. The enzyme catalyses uroporphyrinogen III + 4 H(+) = coproporphyrinogen III + 4 CO2. Its pathway is porphyrin-containing compound metabolism; protoporphyrin-IX biosynthesis; coproporphyrinogen-III from 5-aminolevulinate: step 4/4. Functionally, catalyzes the decarboxylation of four acetate groups of uroporphyrinogen-III to yield coproporphyrinogen-III. The sequence is that of Uroporphyrinogen decarboxylase from Helicobacter pylori (strain J99 / ATCC 700824) (Campylobacter pylori J99).